The chain runs to 257 residues: MDSKLIFFDIDGTIYDHDKNIPESTRKTVAELQRQGHHVFIASGRSPFLVKPILEELGIHSFISYNGQFVVFENQVIYKNPLPENAIRRLLKQADEGKHPVVFMAEDTMKATVADHPHVLEGIGSLKTDYPETDDLFYEGKEIFQLLLFCQDEEEKAYAAFPEFDLVRWHELSTDVLPHGGSKAEGIKKVIERLPFDIGDTYAFGDGLNDLQMIEYVGTGVAMGNAVPELKEIADFVTKPVDEDGIAYAVKELGLLK.

Asp-9 (nucleophile) is an active-site residue. Mg(2+) is bound at residue Asp-9. Ile-10 lines the phosphate pocket. Residue Asp-11 coordinates Mg(2+). Residues 43–44 (SG) and Lys-183 each bind phosphate. Residue Asp-206 participates in Mg(2+) binding. Asn-209 serves as a coordination point for phosphate.

It belongs to the HAD-like hydrolase superfamily. Cof family. The cofactor is Mg(2+).

This is Putative phosphatase YkrA (ykrA) from Bacillus subtilis (strain 168).